The primary structure comprises 138 residues: Small ribosomal subunit protein uS11c (138 aa).

The segment at 1 to 22 (MAKSIPKTGSRKNVRIGSRNQT) is disordered.

It belongs to the universal ribosomal protein uS11 family. In terms of assembly, part of the 30S ribosomal subunit.

The protein localises to the plastid. Its subcellular location is the chloroplast. The polypeptide is Small ribosomal subunit protein uS11c (Phaseolus angularis (Azuki bean)).